A 337-amino-acid polypeptide reads, in one-letter code: 2-oxoglutarate-Fe(II) type oxidoreductase (337 aa).

Residues Ala-179 to Gly-282 form the Fe2OG dioxygenase domain. Fe cation-binding residues include His-205, Asp-207, and His-263. Arg-273 is a 2-oxoglutarate binding site.

Belongs to the iron/ascorbate-dependent oxidoreductase family. Requires Fe(2+) as cofactor. In terms of tissue distribution, endocrocin is specifically produced in conidia.

Its pathway is secondary metabolite biosynthesis. Its function is as follows. 2-oxoglutarate-Fe(II) type oxidoreductase; part of the gene cluster that mediates the biosynthesis of endocrocin, a simple anthraquinone interesting for many biotechnological applications. The pathway begins with the synthesis of atrochrysone thioester by the polyketide synthase (PKS) encA. The atrochrysone carboxyl ACP thioesterase encB then breaks the thioester bond and releases the atrochrysone carboxylic acid from encA. The atrochrysone carboxylic acid is then converted to endocrocin anthrone which is further oxidized into endocrocin by encC. The exact function of encD has not been identified yet, but it negatively regulates endocrocin production, likely through the modification of endocrocin itself. This Aspergillus fumigatus (strain ATCC MYA-4609 / CBS 101355 / FGSC A1100 / Af293) (Neosartorya fumigata) protein is 2-oxoglutarate-Fe(II) type oxidoreductase.